Here is a 176-residue protein sequence, read N- to C-terminus: Membrane glycoprotein UL144 (176 aa).

The first 20 residues, Met1–Thr20, serve as a signal peptide directing secretion. A TNFR-Cys repeat occupies Pro58–Cys95. 3 disulfides stabilise this stretch: Cys59–Cys71, Cys74–Cys87, and Cys77–Cys95. The helical transmembrane segment at Leu134–Ile154 threads the bilayer.

Interacts with host TRIM23; this interaction causes auto-ubiquitination of TRAF6, leading to NF-kappaB activation.

It is found in the membrane. In terms of biological role, activates NF-kappa-B in a tumor necrosis factor receptor (TNFR)-associated factor 6 (TRAF6)-dependent manner, causing the up-regulation of the chemokine CCL22. The sequence is that of Membrane glycoprotein UL144 (UL144) from Human cytomegalovirus (strain Merlin) (HHV-5).